The chain runs to 530 residues: Probable ATP-binding protein YbiT (530 aa).

2 consecutive ABC transporter domains span residues 2-252 and 320-526; these read LVSS…ERLL and LEVE…YLRS. Residues 34–41 and 352–359 each bind ATP; these read GANGSGKS and GTNGVGKS.

It belongs to the ABC transporter superfamily. ABCF family. YbiT subfamily.

This chain is Probable ATP-binding protein YbiT (ybiT), found in Escherichia coli O157:H7.